The chain runs to 120 residues: Eukaryotic translation initiation factor 4E-binding protein 2 (120 aa).

A phosphothreonine; by MTOR mark is found at threonine 37 and threonine 46. Residues 54 to 60 (YDRKFLL) carry the YXXXXLphi motif motif. A Phosphoserine; by MTOR modification is found at serine 65. A Phosphothreonine; by MTOR modification is found at threonine 70. Serine 83 carries the post-translational modification Phosphoserine. Deamidated asparagine is present on residues asparagine 99 and asparagine 102. The short motif at 116-120 (FEMDI) is the TOS motif element.

Belongs to the eIF4E-binding protein family. In terms of assembly, hypophosphorylated EIF4EBP2 interacts with EIF4E; phosphorylation of EIF4EBP2 by mTORC1 causes dissociation of the complex allowing EIF4G1/EIF4G3 to bind and consequent initiation of translation. Interacts (via TOS motif) with RPTOR; promoting phosphorylation by mTORC1. Interacts with PCMT1; required to prevent isoaspartate accumulation and convert isoaspartate to Asp. Post-translationally, phosphorylation at Thr-37, Thr-46, Ser-65, Thr-70 and Ser-83 is mediated by MTOR and corresponds to the hyperphosphorylated form: it abolishes binding to EIF4E by inducing folding of intrinsically disordered regions. First phosphorylated at Thr-37 and Thr-46 by MTOR, inducing folding of region encompassing residues from Pro-18 to Arg-62 of into a four-stranded beta-domain that sequesters the helical YXXXXLPhi motif into a partly buried beta-strand, blocking accessibility to EIF4E. Protein phosphorylated at Thr-37 and Thr-46 is however unstable and subsequent phosphorylation at Ser-65, Thr-70 and Ser-83 is required to stabilize the fold, decreasing affinity for EIF4E by a factor of 4000. Phosphorylated in response to insulin, EGF and PDGF. In terms of processing, deamidated at Asn-99 and Asn-102 to aspartate (Asp) in brain. Deamidation promotes interaction with RPTOR, subsequent phosphorylation by mTORC1 and increased translation, leading to impair kinetics of excitatory synaptic transmission. Deamidation takes place during postnatal development, when the PI3K-Akt-mTOR signaling is reduced, suggesting it acts as a compensatory mechanism to promote translation despite attenuated PI3K-Akt-mTOR signaling in neuron development. Deamidation converts Asn residues into a mixture of Asp and isoaspartate; interactions with PCMT1 is required to prevent isoaspartate accumulation and convert isoaspartate to Asp. Enriched in brain.

It localises to the cytoplasm. It is found in the nucleus. Functionally, repressor of translation initiation involved in synaptic plasticity, learning and memory formation. Regulates EIF4E activity by preventing its assembly into the eIF4F complex: hypophosphorylated form of EIF4EBP2 competes with EIF4G1/EIF4G3 and strongly binds to EIF4E, leading to repress translation. In contrast, hyperphosphorylated form dissociates from EIF4E, allowing interaction between EIF4G1/EIF4G3 and EIF4E, leading to initiation of translation. EIF4EBP2 is enriched in brain and acts as a regulator of synapse activity and neuronal stem cell renewal via its ability to repress translation initiation. Mediates the regulation of protein translation by hormones, growth factors and other stimuli that signal through the MAP kinase and mTORC1 pathways. The chain is Eukaryotic translation initiation factor 4E-binding protein 2 from Mus musculus (Mouse).